The primary structure comprises 30 residues: Dermaseptin-3.1TR (30 aa).

In terms of tissue distribution, expressed by the skin glands.

The protein resides in the secreted. Functionally, has antimicrobial activity. This is Dermaseptin-3.1TR from Phyllomedusa trinitatis (Trinidad leaf frog).